Here is a 63-residue protein sequence, read N- to C-terminus: Large ribosomal subunit protein uL30 (63 aa).

This sequence belongs to the universal ribosomal protein uL30 family. As to quaternary structure, part of the 50S ribosomal subunit.

The sequence is that of Large ribosomal subunit protein uL30 from Rickettsia canadensis (strain McKiel).